We begin with the raw amino-acid sequence, 555 residues long: uncharacterized protein (555 aa).

Topologically, residues methionine 1–glycine 83 are extracellular. The chain crosses the membrane as a helical span at residues leucine 84 to methionine 104. Over aspartate 105–threonine 125 the chain is Cytoplasmic. A helical transmembrane segment spans residues isoleucine 126–alanine 146. Residues glycine 147 to lysine 188 are Extracellular-facing. A helical membrane pass occupies residues tryptophan 189–alanine 209. The Cytoplasmic portion of the chain corresponds to asparagine 210–glycine 229. Residues isoleucine 230–valine 250 traverse the membrane as a helical segment. The Extracellular segment spans residues lysine 251 to glycine 257. A helical membrane pass occupies residues phenylalanine 258–isoleucine 278. Topologically, residues methionine 279–leucine 356 are cytoplasmic. The segment at alanine 289–alanine 311 is disordered. Residues isoleucine 357–phenylalanine 377 traverse the membrane as a helical segment. Residues serine 378–alanine 386 are Extracellular-facing. The helical transmembrane segment at valine 387–valine 407 threads the bilayer. The Cytoplasmic segment spans residues serine 408–lysine 428. A helical membrane pass occupies residues isoleucine 429–isoleucine 449. The Extracellular portion of the chain corresponds to arginine 450–methionine 459. Residues isoleucine 460 to isoleucine 480 traverse the membrane as a helical segment. At isoleucine 481 to glutamate 491 the chain is on the cytoplasmic side. A helical transmembrane segment spans residues methionine 492–leucine 512. Topologically, residues lysine 513–proline 523 are extracellular. The chain crosses the membrane as a helical span at residues serine 524–leucine 544. Topologically, residues arginine 545–proline 555 are cytoplasmic.

Its subcellular location is the membrane. This is an uncharacterized protein from Saccharomyces cerevisiae (strain ATCC 204508 / S288c) (Baker's yeast).